The primary structure comprises 348 residues: 3',5'-cyclic-nucleotide phosphodiesterase (348 aa).

It depends on Mn(2+) as a cofactor.

The enzyme catalyses a nucleoside 3',5'-cyclic phosphate + H2O = a nucleoside 5'-phosphate + H(+). Hydrolyzes cAMP to 5'-AMP and cGMP to 5'-GMP. Does not show phosphohydrolase activity toward various phosphatidylcholine and phosphorylated sugars. This Helicobacter pylori (strain ATCC 700392 / 26695) (Campylobacter pylori) protein is 3',5'-cyclic-nucleotide phosphodiesterase.